A 3120-amino-acid chain; its full sequence is DNA-directed RNA polymerase subunit beta'' (3120 aa).

Residues cysteine 323, cysteine 396, cysteine 403, and cysteine 406 each contribute to the Zn(2+) site. Residues 595 to 1130 form an insert-1 region; that stretch reads FIGEGKQNVL…LKTLVLKKWF (536 aa). The tract at residues 1796–2346 is insert-2; that stretch reads KGHLVAYARP…NGIIQAKSLL (551 aa). The insert-3 stretch occupies residues 2422 to 2610; the sequence is NSNFLENTHF…PEGEGEKDMT (189 aa). Residues 2726 to 2801 form an insert-4 region; it reads FSKKRWKKSI…KQNQTIILAL (76 aa). The tract at residues 2856 to 2996 is insert-5; the sequence is ASKMSEYMFS…LNQLLSNNLD (141 aa). Residues 2926–2956 are disordered; it reads EGIDSSKIPSSNIPEGKVTQNNKRKSTRKNV. Residues 2932–2946 are compositionally biased toward polar residues; it reads KIPSSNIPEGKVTQN.

Belongs to the RNA polymerase beta' chain family. RpoC2 subfamily. As to quaternary structure, in plastids the minimal PEP RNA polymerase catalytic core is composed of four subunits: alpha, beta, beta', and beta''. When a (nuclear-encoded) sigma factor is associated with the core the holoenzyme is formed, which can initiate transcription. Zn(2+) serves as cofactor.

Its subcellular location is the plastid. It is found in the chloroplast. It carries out the reaction RNA(n) + a ribonucleoside 5'-triphosphate = RNA(n+1) + diphosphate. In terms of biological role, DNA-dependent RNA polymerase catalyzes the transcription of DNA into RNA using the four ribonucleoside triphosphates as substrates. This Chlamydomonas reinhardtii (Chlamydomonas smithii) protein is DNA-directed RNA polymerase subunit beta''.